A 485-amino-acid polypeptide reads, in one-letter code: Cholesterol 16,22-dihydroxylase CYP90G4 (485 aa).

Residues 4-24 (VVILFFLFPTLLVLVVAVLGL) traverse the membrane as a helical segment. C432 is a binding site for heme.

The protein belongs to the cytochrome P450 family. Mainly expressed in leaves and, at low levels, in roots and stems.

Its subcellular location is the membrane. The enzyme catalyses cholesterol + 2 reduced [NADPH--hemoprotein reductase] + 2 O2 = (16S,22S)-dihydroxycholesterol + 2 oxidized [NADPH--hemoprotein reductase] + 2 H2O + 2 H(+). The protein operates within steroid metabolism; cholesterol metabolism. Its function is as follows. Involved in the biosynthesis of spiroketal steroid and saponin natural products from cholesterol such as diosgenin and analogs (e.g. furostanol and spirostanol), plant defense compounds used as main precursors for the industrial production of steroid hormones. During the 5,6-spiroketalization of cholesterol, catalyzes the hydroxylation of cholesterol to form 16S,22S-dihydroxycholesterol and, possibly, the subsequent conversion of 16S,22S-dihydroxycholesterol into 16-oxo-22-hydroxy-cholesterol and 16-hydroxy-22-oxo-cholesterol. 16-hydroxy-22-oxo-cholesterol submit a spontaneous reaction leading to the production of furostanol-type steroid diastereomers, precursors of diosgenin. This is Cholesterol 16,22-dihydroxylase CYP90G4 from Paris polyphylla (Daiswa polyphylla).